We begin with the raw amino-acid sequence, 400 residues long: Coiled-coil domain-containing glutamate-rich protein 1 (400 aa).

A compositionally biased stretch (basic and acidic residues) spans 1 to 11; it reads MTQTVNEREDP. Disordered stretches follow at residues 1 to 68, 134 to 164, and 203 to 353; these read MTQT…IPGP, RPPG…PPID, and QEKL…DKFL. Positions 31 to 45 are enriched in basic residues; that stretch reads YHRRQRGAPMSKRRY. The span at 46–57 shows a compositional bias: basic and acidic residues; that stretch reads RDGPKTEYEAPR. The segment covering 137 to 157 has biased composition (basic residues); sequence GRKKRWGRRGRGLRRHPRRSF. Low complexity predominate over residues 209 to 220; the sequence is QQAALRAHQAQA. Positions 255–271 are enriched in polar residues; that stretch reads PSLTFSPAPGQQNQSPT. A compositionally biased stretch (acidic residues) spans 275-347; the sequence is VEEEEKNVDD…EAGLEEGEQR (73 aa). Residues 299–335 adopt a coiled-coil conformation; the sequence is EEEEVDGESEDEDVDEEEVEEAGNGEEREEDQEEEDV.

The protein resides in the nucleus. Regulator of histone epigenetic modifications and chromatin compaction into the sperm head, required for histone-to-protamine (HTP) transition. HTP is a key event in which somatic histones are first replaced by testis-specific histone variants, then transition proteins (TNPs) are incorporated into the spermatid nucleus, and finally protamines (PRMs) replace the TNPs to promote chromatin condensation. The chain is Coiled-coil domain-containing glutamate-rich protein 1 (Ccer1) from Rattus norvegicus (Rat).